Consider the following 390-residue polypeptide: Succinate--CoA ligase [ADP-forming] subunit beta (390 aa).

Positions lysine 9–methionine 245 constitute an ATP-grasp domain. ATP-binding positions include lysine 46, glycine 53–glycine 55, glutamate 99, serine 102, and glutamate 107. Positions 200 and 214 each coordinate Mg(2+). Substrate contacts are provided by residues asparagine 265 and glycine 322–valine 324.

The protein belongs to the succinate/malate CoA ligase beta subunit family. Heterotetramer of two alpha and two beta subunits. Mg(2+) serves as cofactor.

It catalyses the reaction succinate + ATP + CoA = succinyl-CoA + ADP + phosphate. It carries out the reaction GTP + succinate + CoA = succinyl-CoA + GDP + phosphate. The protein operates within carbohydrate metabolism; tricarboxylic acid cycle; succinate from succinyl-CoA (ligase route): step 1/1. Functionally, succinyl-CoA synthetase functions in the citric acid cycle (TCA), coupling the hydrolysis of succinyl-CoA to the synthesis of either ATP or GTP and thus represents the only step of substrate-level phosphorylation in the TCA. The beta subunit provides nucleotide specificity of the enzyme and binds the substrate succinate, while the binding sites for coenzyme A and phosphate are found in the alpha subunit. The polypeptide is Succinate--CoA ligase [ADP-forming] subunit beta (Coxiella burnetii (strain RSA 331 / Henzerling II)).